A 189-amino-acid polypeptide reads, in one-letter code: Transcription factor FapR (189 aa).

It belongs to the FapR family.

Its function is as follows. Transcriptional factor involved in regulation of membrane lipid biosynthesis by repressing genes involved in fatty acid and phospholipid metabolism. In Listeria monocytogenes serotype 4a (strain HCC23), this protein is Transcription factor FapR.